We begin with the raw amino-acid sequence, 464 residues long: Soluble pyridine nucleotide transhydrogenase (464 aa).

35–44 (DSRRVVGGNC) is an FAD binding site.

Belongs to the class-I pyridine nucleotide-disulfide oxidoreductase family. The cofactor is FAD.

The protein localises to the cytoplasm. The catalysed reaction is NAD(+) + NADPH = NADH + NADP(+). Conversion of NADPH, generated by peripheral catabolic pathways, to NADH, which can enter the respiratory chain for energy generation. The polypeptide is Soluble pyridine nucleotide transhydrogenase (Pseudomonas aeruginosa (strain LESB58)).